We begin with the raw amino-acid sequence, 408 residues long: Zinc finger and SCAN domain-containing protein 1 (408 aa).

A disordered region spans residues 1–34; the sequence is MLPRPKAPASPRRPQTPTPSEQDADPGPASPRDT. The 83-residue stretch at 38-120 folds into the SCAN box domain; the sequence is RLRFRQFQYH…SLVEDLTQMC (83 aa). Disordered regions lie at residues 136–155, 177–203, and 215–273; these read WSFGEEEDGKSPRSQKEPSQ, LETTQLQQSLHTRAEAEAPRAPGLLGS, and DEPE…GGTQ. Residues 177–187 are compositionally biased toward polar residues; sequence LETTQLQQSLH. C2H2-type zinc fingers lie at residues 292 to 314 and 320 to 342; these read FQCADCGMVFTWVTHFIEHQKTH and FPCPECGKVFLHNSVLTEHGKIH. The interval 344–379 is disordered; that stretch reads LEPPRKKAPRSKGPRESVPPRDGAQGPVAPRSPKRP. A C2H2-type 3 zinc finger spans residues 380–402; sequence FQCSVCGKAFPWMVHLIDHQKLH.

The protein localises to the nucleus. May be involved in transcriptional regulation. The protein is Zinc finger and SCAN domain-containing protein 1 (ZSCAN1) of Homo sapiens (Human).